Reading from the N-terminus, the 490-residue chain is Subtilisin-like protease 8 (490 aa).

A signal peptide spans 1 to 26 (MKGLLSLSVLPVLAYASPMIVDSIHQ). The propeptide occupies 27 to 134 (NAAPILSSTN…YIERDSEVHT (108 aa)). The region spanning 43–134 (SYIVVFKKGV…YIERDSEVHT (92 aa)) is the Inhibitor I9 domain. Positions 144–450 (PWGLARISHR…GGSDDYKKII (307 aa)) constitute a Peptidase S8 domain. Residues D180 and H212 each act as charge relay system in the active site. N282 is a glycosylation site (N-linked (GlcNAc...) asparagine). S378 functions as the Charge relay system in the catalytic mechanism. A glycan (N-linked (GlcNAc...) asparagine) is linked at N456.

The protein belongs to the peptidase S8 family.

Its subcellular location is the secreted. In terms of biological role, secreted subtilisin-like serine protease with keratinolytic activity that contributes to pathogenicity. This chain is Subtilisin-like protease 8 (SUB8), found in Arthroderma benhamiae (strain ATCC MYA-4681 / CBS 112371) (Trichophyton mentagrophytes).